Reading from the N-terminus, the 191-residue chain is Fe/S biogenesis protein NfuA (191 aa).

Positions 149 and 152 each coordinate [4Fe-4S] cluster.

The protein belongs to the NfuA family. As to quaternary structure, homodimer. The cofactor is [4Fe-4S] cluster.

Involved in iron-sulfur cluster biogenesis. Binds a 4Fe-4S cluster, can transfer this cluster to apoproteins, and thereby intervenes in the maturation of Fe/S proteins. Could also act as a scaffold/chaperone for damaged Fe/S proteins. In Escherichia coli O7:K1 (strain IAI39 / ExPEC), this protein is Fe/S biogenesis protein NfuA.